The primary structure comprises 215 residues: Protein Thf1 (215 aa).

A coiled-coil region spans residues 188-209 (IELVQETIAAERRKKERRQAEQ).

Belongs to the THF1 family.

Functionally, may be involved in photosynthetic membrane biogenesis. This chain is Protein Thf1, found in Synechococcus sp. (strain CC9902).